The chain runs to 235 residues: Small ribosomal subunit protein uS2c (235 aa).

Belongs to the universal ribosomal protein uS2 family.

It is found in the plastid. The protein localises to the chloroplast. The sequence is that of Small ribosomal subunit protein uS2c (rps2) from Guillardia theta (Cryptophyte).